An 862-amino-acid chain; its full sequence is DNA gyrase subunit A (862 aa).

The Topo IIA-type catalytic domain occupies 38 to 501; it reads LPDARDGLKP…DYDDIDVEDL (464 aa). The O-(5'-phospho-DNA)-tyrosine intermediate role is filled by Tyr126. The GyrA-box signature appears at 528-534; that stretch reads QKRGGKG. A disordered region spans residues 843–862; the sequence is KEESDDDDIVADDTQEQDME. The segment covering 845-862 has biased composition (acidic residues); that stretch reads ESDDDDIVADDTQEQDME.

The protein belongs to the type II topoisomerase GyrA/ParC subunit family. As to quaternary structure, heterotetramer, composed of two GyrA and two GyrB chains. In the heterotetramer, GyrA contains the active site tyrosine that forms a transient covalent intermediate with DNA, while GyrB binds cofactors and catalyzes ATP hydrolysis.

The protein resides in the cytoplasm. The catalysed reaction is ATP-dependent breakage, passage and rejoining of double-stranded DNA.. In terms of biological role, a type II topoisomerase that negatively supercoils closed circular double-stranded (ds) DNA in an ATP-dependent manner to modulate DNA topology and maintain chromosomes in an underwound state. Negative supercoiling favors strand separation, and DNA replication, transcription, recombination and repair, all of which involve strand separation. Also able to catalyze the interconversion of other topological isomers of dsDNA rings, including catenanes and knotted rings. Type II topoisomerases break and join 2 DNA strands simultaneously in an ATP-dependent manner. The protein is DNA gyrase subunit A of Campylobacter fetus.